Here is a 79-residue protein sequence, read N- to C-terminus: RNA-binding protein Hfq (79 aa).

The 61-residue stretch at 10–70 (DAFLNHVRKT…ISTIMPAQPI (61 aa)) folds into the Sm domain.

Belongs to the Hfq family. In terms of assembly, homohexamer.

In terms of biological role, RNA chaperone that binds small regulatory RNA (sRNAs) and mRNAs to facilitate mRNA translational regulation in response to envelope stress, environmental stress and changes in metabolite concentrations. Also binds with high specificity to tRNAs. This is RNA-binding protein Hfq from Ruegeria sp. (strain TM1040) (Silicibacter sp.).